Reading from the N-terminus, the 293-residue chain is Ribosomal protein L11 methyltransferase (293 aa).

S-adenosyl-L-methionine is bound by residues Thr-145, Gly-166, Asp-188, and Asn-230.

It belongs to the methyltransferase superfamily. PrmA family.

The protein resides in the cytoplasm. It catalyses the reaction L-lysyl-[protein] + 3 S-adenosyl-L-methionine = N(6),N(6),N(6)-trimethyl-L-lysyl-[protein] + 3 S-adenosyl-L-homocysteine + 3 H(+). In terms of biological role, methylates ribosomal protein L11. This is Ribosomal protein L11 methyltransferase from Klebsiella pneumoniae (strain 342).